We begin with the raw amino-acid sequence, 224 residues long: Imidazoleglycerol-phosphate dehydratase (224 aa).

This sequence belongs to the imidazoleglycerol-phosphate dehydratase family.

The enzyme catalyses D-erythro-1-(imidazol-4-yl)glycerol 3-phosphate = 3-(imidazol-4-yl)-2-oxopropyl phosphate + H2O. Its pathway is amino-acid biosynthesis; L-histidine biosynthesis; L-histidine from 5-phospho-alpha-D-ribose 1-diphosphate: step 6/9. The sequence is that of Imidazoleglycerol-phosphate dehydratase (HIS3) from Cyberlindnera jadinii (Torula yeast).